A 291-amino-acid polypeptide reads, in one-letter code: Basic helix-loop-helix protein 80 (291 aa).

The tract at residues 65–120 (SAVLDTSPSVDRKRKAAEDSAHSKDSCKDGKSRRGKKASKEVEEKSTTEDEPPKGY) is disordered. The segment covering 80-117 (AAEDSAHSKDSCKDGKSRRGKKASKEVEEKSTTEDEPP) has biased composition (basic and acidic residues). The Nuclear localization signal signature appears at 125-132 (ARRGQATD). The tract at residues 129–142 (QATDSHSLAERVRR) is basic motif; degenerate. One can recognise a bHLH domain in the interval 129–179 (QATDSHSLAERVRRERISERMRMLQALVPGCDKVTGKALILDEIINYVQSL). The helix-loop-helix motif stretch occupies residues 143–179 (ERISERMRMLQALVPGCDKVTGKALILDEIINYVQSL).

Belongs to the bHLH protein family. In terms of assembly, homodimer. Interacts with IBH1, BC1 and LO9-177.

Its subcellular location is the nucleus. Functionally, together with BCL2, positive regulator of cell elongation at least partially through increased gibberellic acid (GA) biosynthesis. This is Basic helix-loop-helix protein 80 from Oryza sativa subsp. indica (Rice).